The following is a 605-amino-acid chain: Aspartate--tRNA(Asp/Asn) ligase (605 aa).

An L-aspartate-binding site is contributed by glutamate 183. Residues 207–210 (QLYK) are aspartate. Arginine 229 lines the L-aspartate pocket. Residues 229–231 (RDE) and glutamine 238 each bind ATP. Residue histidine 456 participates in L-aspartate binding. Glutamate 490 provides a ligand contact to ATP. Arginine 497 provides a ligand contact to L-aspartate. Position 542 to 545 (542 to 545 (GLDR)) interacts with ATP.

This sequence belongs to the class-II aminoacyl-tRNA synthetase family. Type 1 subfamily. In terms of assembly, homodimer.

The protein resides in the cytoplasm. It carries out the reaction tRNA(Asx) + L-aspartate + ATP = L-aspartyl-tRNA(Asx) + AMP + diphosphate. Its function is as follows. Aspartyl-tRNA synthetase with relaxed tRNA specificity since it is able to aspartylate not only its cognate tRNA(Asp) but also tRNA(Asn). Reaction proceeds in two steps: L-aspartate is first activated by ATP to form Asp-AMP and then transferred to the acceptor end of tRNA(Asp/Asn). This chain is Aspartate--tRNA(Asp/Asn) ligase, found in Heliobacterium modesticaldum (strain ATCC 51547 / Ice1).